Reading from the N-terminus, the 57-residue chain is MAFDKKLLEIVACPVCKGKLEYNKEAQQLICKADRLVYPINDGIPVLLENKAEPLIE.

Belongs to the UPF0434 family.

The sequence is that of UPF0434 protein Shal_2504 from Shewanella halifaxensis (strain HAW-EB4).